The sequence spans 398 residues: Metallophosphoesterase 1 (398 aa).

Residues 25–45 (VCFVSSVLIFCEFFIYYLVIF) traverse the membrane as a helical segment. A divalent metal cation contacts are provided by aspartate 75, aspartate 117, asparagine 155, histidine 251, histidine 305, and histidine 307. The helical transmembrane segment at 359–379 (VFAIYWAAGALLVVLVLAHFQ) threads the bilayer. Positions 394-398 (KHKAA) match the Di-lysine motif motif.

It belongs to the metallophosphoesterase superfamily. MPPE1 family. It depends on Mn(2+) as a cofactor.

The protein localises to the endoplasmic reticulum-Golgi intermediate compartment membrane. Metallophosphoesterase that catalyzes the removal of a side-chain ethanolamine-phosphate (EtNP) from the second mannose of the GPI-anchor protein intermediate. Participates in the glycan remodeling steps of GPI-anchor maturation to allow an efficient transport of GPI-anchor proteins from the endoplasmic reticulum to the Golgi. This is Metallophosphoesterase 1 from Gallus gallus (Chicken).